The following is a 290-amino-acid chain: L-proline cis-3-hydroxylase 2 (290 aa).

Fe cation is bound by residues H107, D109, and H158. Residue R168 participates in 2-oxoglutarate binding.

The protein belongs to the L-proline cis-4-/cis-3-hydroxylase family. In terms of assembly, homodimer. It depends on Fe(2+) as a cofactor.

The enzyme catalyses L-proline + 2-oxoglutarate + O2 = cis-3-hydroxy-L-proline + succinate + CO2. Its activity is regulated as follows. Inhibited by metal ions such as Co(2+), Zn(2+), Ni(2+) or Cu(2+). Is also inhibited by EDTA in vitro. Functionally, dioxygenase that catalyzes the 2-oxoglutarate-dependent selective hydroxylation of free L-proline to cis-3-hydroxy-L-proline (cis-3-Hyp). This is L-proline cis-3-hydroxylase 2 from Streptomyces sp.